A 917-amino-acid polypeptide reads, in one-letter code: Probable dipeptidyl-aminopeptidase B (917 aa).

Residues Met-1–Pro-16 are compositionally biased toward basic and acidic residues. Residues Met-1–Ser-21 are disordered. Over Met-1 to Ala-99 the chain is Cytoplasmic. The chain crosses the membrane as a helical; Signal-anchor for type II membrane protein span at residues Leu-100 to Phe-120. Over Arg-121 to Ile-917 the chain is Vacuolar. N-linked (GlcNAc...) asparagine glycans are attached at residues Asn-135, Asn-351, and Asn-574. Ser-756 functions as the Charge relay system in the catalytic mechanism. A glycan (N-linked (GlcNAc...) asparagine) is linked at Asn-815. Catalysis depends on charge relay system residues Asp-833 and His-866. Residue Asn-902 is glycosylated (N-linked (GlcNAc...) asparagine).

Belongs to the peptidase S9B family.

Its subcellular location is the vacuole membrane. The enzyme catalyses Release of an N-terminal dipeptide, Xaa-Yaa-|-Zaa-, from a polypeptide, preferentially when Yaa is Pro, provided Zaa is neither Pro nor hydroxyproline.. Functionally, type IV dipeptidyl-peptidase which removes N-terminal dipeptides sequentially from polypeptides having unsubstituted N-termini provided that the penultimate residue is proline. This chain is Probable dipeptidyl-aminopeptidase B (DAPB), found in Ajellomyces capsulatus (strain H88) (Darling's disease fungus).